Reading from the N-terminus, the 184-residue chain is ATP synthase subunit b, chloroplastic (184 aa).

Residues 27 to 49 (LATNPINLSVVLGVLIFFGKGVL) form a helical membrane-spanning segment.

It belongs to the ATPase B chain family. As to quaternary structure, F-type ATPases have 2 components, F(1) - the catalytic core - and F(0) - the membrane proton channel. F(1) has five subunits: alpha(3), beta(3), gamma(1), delta(1), epsilon(1). F(0) has four main subunits: a(1), b(1), b'(1) and c(10-14). The alpha and beta chains form an alternating ring which encloses part of the gamma chain. F(1) is attached to F(0) by a central stalk formed by the gamma and epsilon chains, while a peripheral stalk is formed by the delta, b and b' chains.

It is found in the plastid. It localises to the chloroplast thylakoid membrane. Functionally, f(1)F(0) ATP synthase produces ATP from ADP in the presence of a proton or sodium gradient. F-type ATPases consist of two structural domains, F(1) containing the extramembraneous catalytic core and F(0) containing the membrane proton channel, linked together by a central stalk and a peripheral stalk. During catalysis, ATP synthesis in the catalytic domain of F(1) is coupled via a rotary mechanism of the central stalk subunits to proton translocation. In terms of biological role, component of the F(0) channel, it forms part of the peripheral stalk, linking F(1) to F(0). The sequence is that of ATP synthase subunit b, chloroplastic from Nicotiana tomentosiformis (Tobacco).